Here is a 767-residue protein sequence, read N- to C-terminus: ATPase family gene 2 protein homolog B (767 aa).

An N-acetylmethionine modification is found at M1. ATP contacts are provided by residues 241 to 248 (GPPGVGKT) and 507 to 514 (GPPGCAKT).

The protein belongs to the AAA ATPase family. AFG2 subfamily. In terms of assembly, part of the 55LCC heterohexameric ATPase complex composed at least of AIRIM, AFG2A, AFG2B and CINP. Associates with pre-60S ribosomal particles.

It localises to the cytoplasm. It is found in the cytoskeleton. Its subcellular location is the spindle. The protein localises to the nucleus. The enzyme catalyses ATP + H2O = ADP + phosphate + H(+). In the context of 55LCC heterohexameric ATPase complex, the ATPase activity is stimulated by DNA binding and inhibited in presence of RNA. ATP-dependent chaperone part of the 55LCC heterohexameric ATPase complex which is chromatin-associated and promotes replisome proteostasis to maintain replication fork progression and genome stability. Required for replication fork progression, sister chromatid cohesion, and chromosome stability. The ATPase activity is specifically enhanced by replication fork DNA and is coupled to cysteine protease-dependent cleavage of replisome substrates in response to replication fork damage. Uses ATPase activity to process replisome substrates in S-phase, facilitating their proteolytic turnover from chromatin to ensure DNA replication and mitotic fidelity. Plays an essential role in the cytoplasmic maturation steps of pre-60S ribosomal particles by promoting the release of shuttling protein RSL24D1/RLP24 from the pre-ribosomal particles. This chain is ATPase family gene 2 protein homolog B (AFG2B), found in Bos taurus (Bovine).